Here is a 647-residue protein sequence, read N- to C-terminus: Putative ferric-chelate reductase 1 homolog (647 aa).

Residues 10–30 (WLATLVTALLAVAIWPDPGQS) traverse the membrane as a helical segment. A Reelin domain is found at 25 to 195 (PDPGQSLPQG…AAPPLPTQSP (171 aa)). N-linked (GlcNAc...) asparagine glycosylation is found at Asn-127 and Asn-158. Residues 245–368 (TKSCTSITVV…GKYHLLVASG (124 aa)) form the DOMON domain. Positions 372-570 (KENSVGYHDI…HLIFSIGGMA (199 aa)) constitute a Cytochrome b561 domain. Residues 408 to 428 (LHGAFMIAAWIGTTSLGIIFA) traverse the membrane as a helical segment. Positions 409 and 450 each coordinate heme b. 5 consecutive transmembrane segments (helical) span residues 452–472 (LLMV…WVEL), 480–500 (HSII…GALF), 515–535 (GHWL…FFSV), 548–568 (WILV…SIGG), and 616–636 (LLGV…LLVV). Residues His-480 and His-516 each coordinate heme b.

This sequence belongs to the FRRS1 family. Heme b serves as cofactor.

The protein localises to the membrane. Putative ferric-chelate reductases reduce Fe(3+) to Fe(2+) before its transport from the endosome to the cytoplasm. The sequence is that of Putative ferric-chelate reductase 1 homolog from Drosophila melanogaster (Fruit fly).